A 737-amino-acid chain; its full sequence is Phosphoribosylformylglycinamidine synthase subunit PurL (737 aa).

His50 is an active-site residue. Residues Tyr53 and Lys92 each coordinate ATP. Glu94 is a Mg(2+) binding site. Residues 95–98 (SHNH) and Arg117 contribute to the substrate site. His96 (proton acceptor) is an active-site residue. Asp118 is a binding site for Mg(2+). Gln241 provides a ligand contact to substrate. Asp269 contacts Mg(2+). Residue 313-315 (ESQ) participates in substrate binding. 2 residues coordinate ATP: Asp494 and Gly531. Asn532 contributes to the Mg(2+) binding site. A substrate-binding site is contributed by Ser534.

This sequence belongs to the FGAMS family. As to quaternary structure, monomer. Part of the FGAM synthase complex composed of 1 PurL, 1 PurQ and 2 PurS subunits.

The protein localises to the cytoplasm. The catalysed reaction is N(2)-formyl-N(1)-(5-phospho-beta-D-ribosyl)glycinamide + L-glutamine + ATP + H2O = 2-formamido-N(1)-(5-O-phospho-beta-D-ribosyl)acetamidine + L-glutamate + ADP + phosphate + H(+). It functions in the pathway purine metabolism; IMP biosynthesis via de novo pathway; 5-amino-1-(5-phospho-D-ribosyl)imidazole from N(2)-formyl-N(1)-(5-phospho-D-ribosyl)glycinamide: step 1/2. Part of the phosphoribosylformylglycinamidine synthase complex involved in the purines biosynthetic pathway. Catalyzes the ATP-dependent conversion of formylglycinamide ribonucleotide (FGAR) and glutamine to yield formylglycinamidine ribonucleotide (FGAM) and glutamate. The FGAM synthase complex is composed of three subunits. PurQ produces an ammonia molecule by converting glutamine to glutamate. PurL transfers the ammonia molecule to FGAR to form FGAM in an ATP-dependent manner. PurS interacts with PurQ and PurL and is thought to assist in the transfer of the ammonia molecule from PurQ to PurL. This is Phosphoribosylformylglycinamidine synthase subunit PurL from Rhodopseudomonas palustris (strain BisA53).